The chain runs to 227 residues: MICOS complex subunit MIC19 (227 aa).

Gly2 is lipidated: N-myristoyl glycine. Ser29 bears the Phosphoserine mark. Disordered stretches follow at residues Asp34 to Glu61 and Glu73 to Asp92. A compositionally biased stretch (polar residues) spans Ser39–Tyr49. Tyr49 carries the post-translational modification Phosphotyrosine. Phosphoserine occurs at positions 50, 56, and 58. Lys142 is subject to N6-acetyllysine. The region spanning His180–Met222 is the CHCH domain. Short sequence motifs (cx9C motif) lie at residues Cys183–Cys193 and Cys204–Cys214. Intrachain disulfides connect Cys183/Cys214 and Cys193/Cys204.

This sequence belongs to the MICOS complex subunit Mic19 family. Metazoan Mic19 subfamily. In terms of assembly, component of the mitochondrial contact site and cristae organizing system (MICOS) complex, composed of at least MICOS10/MIC10, CHCHD3/MIC19, CHCHD6/MIC25, APOOL/MIC27, IMMT/MIC60, APOO/MIC23/MIC26 and MICOS13/MIC13. This complex was also known under the names MINOS or MitOS complex. The MICOS complex associates with mitochondrial outer membrane proteins SAMM50, MTX1 and MTX2 (together described as components of the mitochondrial outer membrane sorting assembly machinery (SAM) complex) and DNAJC11, mitochondrial inner membrane protein TMEM11 and with HSPA9. The MICOS and SAM complexes together with DNAJC11 are part of a large protein complex spanning both membranes termed the mitochondrial intermembrane space bridging (MIB) complex. Interacts with HSPA1A/HSPA1B and OPA1, preferentially with the soluble OPA1 form. Interacts with IMMT/MIC60. (Microbial infection) Interacts with human cytomegalovirus protein UL13; this interaction alters cristae architecture. As to expression, detected at low levels in brain, placenta, lung, liver, kidney and pancreas with increased levels in heart and skeletal muscle. Higher expression in primary lung cancers than in normal lung tissue.

Its subcellular location is the mitochondrion inner membrane. It is found in the cytoplasm. It localises to the nucleus. The protein resides in the mitochondrion. Component of the MICOS complex, a large protein complex of the mitochondrial inner membrane that plays crucial roles in the maintenance of crista junctions, inner membrane architecture, and formation of contact sites to the outer membrane. Plays an important role in the maintenance of the MICOS complex stability and the mitochondrial cristae morphology. Has also been shown to function as a transcription factor which binds to the BAG1 promoter and represses BAG1 transcription. This is MICOS complex subunit MIC19 (CHCHD3) from Homo sapiens (Human).